The primary structure comprises 233 residues: Pirin-like protein YhaK (233 aa).

Belongs to the pirin family. As to quaternary structure, monomer.

Its subcellular location is the cytoplasm. Its function is as follows. Does not have quercetin 2,3-dioxygenase activity. This chain is Pirin-like protein YhaK (yhaK), found in Escherichia coli (strain K12).